Here is a 1144-residue protein sequence, read N- to C-terminus: Guanine nucleotide-binding protein G(s) subunit alpha isoforms XLas (1144 aa).

4 disordered regions span residues 1–186, 316–558, 622–657, and 735–772; these read MGML…LAPG, DDDT…PAAG, SASA…SAWP, and RSRS…DKKR. The segment covering 31 to 46 has biased composition (low complexity); sequence LEAQGAAAPGAGVGPA. The segment covering 343-356 has biased composition (basic and acidic residues); that stretch reads KSEHAKRPPLERQA. Positions 358–369 are enriched in polar residues; sequence ETGNSPISSTTA. A compositionally biased stretch (basic and acidic residues) spans 370–381; that stretch reads EEAKVPSLERGE. Low complexity-rich tracts occupy residues 467-499 and 518-558; these read PAAA…AAEA and EPAA…PAAG. Residues 644-654 are compositionally biased toward pro residues; it reads PPTPRPAPRPS. A compositionally biased stretch (basic and acidic residues) spans 743 to 767; that stretch reads KAKDPMEERRKQMRKEAMEMREQKR. A coiled-coil region spans residues 745–772; that stretch reads KDPMEERRKQMRKEAMEMREQKRADKKR. One can recognise a G-alpha domain in the interval 789–1144; that stretch reads CTHRLLLLGA…RMHLRQYELL (356 aa). Residues 792–805 are G1 motif; it reads RLLLLGAGESGKST. 797–805 is a binding site for GTP; that stretch reads GAGESGKST. Residue Ser-804 participates in Mg(2+) binding. Residues 818-840 form a disordered region; sequence FNGEGGEEDPQAARSNSDGEKAT. A coiled-coil region spans residues 837-863; sequence EKATKVQDIKNNLKEAIETIVAAMSNL. A G2 motif region spans residues 946–954; the sequence is DLPRCRVLT. GTP is bound by residues 947–954, 973–977, and 1042–1045; these read LPRCRVLT, DVGGQ, and NKQD. Arg-951 is subject to ADP-ribosylarginine; by cholera toxin. Thr-954 contacts Mg(2+). Positions 969-978 are G3 motif; that stretch reads FHMFDVGGQR. The interval 1038–1045 is G4 motif; sequence ILFLNKQD. Ser-1102 is subject to Phosphoserine. Residues 1114 to 1119 are G5 motif; sequence TCAVDT. Ala-1116 contacts GTP.

It belongs to the G-alpha family. G(s) subfamily. In terms of assembly, g proteins are composed of 3 units; alpha, beta and gamma. The alpha chain contains the guanine nucleotide binding site. Interacts through its N-terminal region with ALEX which is produced from the same locus in a different open reading frame. This interaction may inhibit its adenylyl cyclase-stimulating activity. Interacts with MAGED2. Enriched in neuroendocrine tissues with a particularly high level of expression in pituitary where it is abundant in intermediate and anterior lobes. In adrenal gland, found in central region containing medullary chromaffin cells but not in cortex. In cerebellum, strongly expressed in perikarya of Purkinje cells. Not detected in liver, kidney or neurohypophysis.

Its subcellular location is the cell membrane. It is found in the apical cell membrane. In terms of biological role, guanine nucleotide-binding proteins (G proteins) function as transducers in numerous signaling pathways controlled by G protein-coupled receptors (GPCRs). Signaling involves the activation of adenylyl cyclases, resulting in increased levels of the signaling molecule cAMP. GNAS functions downstream of several GPCRs, including beta-adrenergic receptors. XLas isoforms interact with the same set of receptors as Gnas isoforms. The sequence is that of Guanine nucleotide-binding protein G(s) subunit alpha isoforms XLas from Rattus norvegicus (Rat).